Reading from the N-terminus, the 934-residue chain is ATP-dependent RNA helicase dbp-10 (934 aa).

A disordered region spans residues 21–43; sequence LFNNDSDFEDNSSKHHTKKGAVT. The Q motif motif lies at 99 to 127; that stretch reads GGFQAMGLNAHLLRAITRKGFSVPTPIQR. The 173-residue stretch at 130-302 folds into the Helicase ATP-binding domain; it reads IPLILERKDV…RAGLQEPSLV (173 aa). 143 to 150 is a binding site for ATP; it reads ARTGSGKT. The DEAD box motif lies at 250 to 253; it reads DEAD. 3 disordered regions span residues 343 to 370, 613 to 722, and 851 to 934; these read GPPEGTKEESDELQARKRKREYRPNPKE, ELGP…FQDP, and GAQP…RQKR. The Helicase C-terminal domain maps to 359-513; it reads KRKREYRPNP…KNPSFAADVV (155 aa). 2 stretches are compositionally biased toward acidic residues: residues 644–654 and 662–700; these read DEDDEDVDMED and EETNAFEDFEDEEEEGEAEEAEEAEAKEDPYADDSDSEM. Positions 864 to 926 are enriched in basic and acidic residues; it reads EKAPKDADKF…VAEKKREKNA (63 aa).

It belongs to the DEAD box helicase family. DDX54/DBP10 subfamily.

The protein resides in the nucleus. It is found in the nucleolus. It carries out the reaction ATP + H2O = ADP + phosphate + H(+). ATP-binding RNA helicase involved in the biogenesis of 60S ribosomal subunits and is required for the normal formation of 25S and 5.8S rRNAs. This is ATP-dependent RNA helicase dbp-10 (dbp-10) from Neurospora crassa (strain ATCC 24698 / 74-OR23-1A / CBS 708.71 / DSM 1257 / FGSC 987).